Reading from the N-terminus, the 213-residue chain is 3-oxoadipate CoA-transferase subunit B (213 aa).

The active site involves Glu50.

Belongs to the 3-oxoacid CoA-transferase subunit B family. In terms of assembly, heterodimer.

It catalyses the reaction 3-oxoadipate + succinyl-CoA = 3-oxoadipyl-CoA + succinate. It functions in the pathway aromatic compound metabolism; beta-ketoadipate pathway; acetyl-CoA and succinyl-CoA from 3-oxoadipate: step 1/2. The chain is 3-oxoadipate CoA-transferase subunit B (pcaJ) from Pseudomonas putida (strain ATCC 47054 / DSM 6125 / CFBP 8728 / NCIMB 11950 / KT2440).